The chain runs to 69 residues: MIERILFPTMSGTSRSPPSYLFIRKNVILDIVQIIKSPYMFAIVEIVFHSCSKTMAVTYELRYTLESHL.

This is an uncharacterized protein from Homo sapiens (Human).